Here is a 147-residue protein sequence, read N- to C-terminus: Small ribosomal subunit protein uS12 (147 aa).

A disordered region spans residues 1 to 22 (MPTINQLVRKPRKSKIEKSDSP). The residue at position 102 (Asp-102) is a 3-methylthioaspartic acid.

It belongs to the universal ribosomal protein uS12 family. Part of the 30S ribosomal subunit. Contacts proteins S8 and S17. May interact with IF1 in the 30S initiation complex.

In terms of biological role, with S4 and S5 plays an important role in translational accuracy. Functionally, interacts with and stabilizes bases of the 16S rRNA that are involved in tRNA selection in the A site and with the mRNA backbone. Located at the interface of the 30S and 50S subunits, it traverses the body of the 30S subunit contacting proteins on the other side and probably holding the rRNA structure together. The combined cluster of proteins S8, S12 and S17 appears to hold together the shoulder and platform of the 30S subunit. The polypeptide is Small ribosomal subunit protein uS12 (Streptococcus pyogenes serotype M12 (strain MGAS2096)).